The sequence spans 38 residues: Large ribosomal subunit protein bL36A (38 aa).

Belongs to the bacterial ribosomal protein bL36 family.

This chain is Large ribosomal subunit protein bL36A, found in Pseudomonas aeruginosa (strain UCBPP-PA14).